Reading from the N-terminus, the 169-residue chain is Putative hydrogenase maturation protease MJ0631 (169 aa).

The protein belongs to the peptidase A31 family.

The protein is Putative hydrogenase maturation protease MJ0631 of Methanocaldococcus jannaschii (strain ATCC 43067 / DSM 2661 / JAL-1 / JCM 10045 / NBRC 100440) (Methanococcus jannaschii).